A 648-amino-acid polypeptide reads, in one-letter code: Macrolide export ATP-binding/permease protein MacB (648 aa).

The ABC transporter domain maps to 5–243; it reads LELKDIRRSY…TGGTEPVVNT (239 aa). 41–48 contributes to the ATP binding site; the sequence is GASGSGKS. Helical transmembrane passes span 273–293, 523–543, 576–596, and 611–631; these read LLTM…VVVG, LFLT…VMNI, AVLV…LIAF, and PLAL…FGWL.

It belongs to the ABC transporter superfamily. Macrolide exporter (TC 3.A.1.122) family. In terms of assembly, homodimer. Part of the tripartite efflux system MacAB-TolC, which is composed of an inner membrane transporter, MacB, a periplasmic membrane fusion protein, MacA, and an outer membrane component, TolC. The complex forms a large protein conduit and can translocate molecules across both the inner and outer membranes. Interacts with MacA.

The protein localises to the cell inner membrane. Functionally, part of the tripartite efflux system MacAB-TolC. MacB is a non-canonical ABC transporter that contains transmembrane domains (TMD), which form a pore in the inner membrane, and an ATP-binding domain (NBD), which is responsible for energy generation. Confers resistance against macrolides. This is Macrolide export ATP-binding/permease protein MacB from Escherichia coli (strain UTI89 / UPEC).